The following is a 239-amino-acid chain: Uridylate kinase (239 aa).

Residue 13-16 (KVSG) participates in ATP binding. UMP is bound at residue G55. ATP-binding residues include G56 and R60. UMP is bound by residues D75 and 136-143 (TGNPFCTT). The ATP site is built by T163, Q164, Y169, and D172.

This sequence belongs to the UMP kinase family. In terms of assembly, homohexamer.

It is found in the cytoplasm. It catalyses the reaction UMP + ATP = UDP + ADP. Its pathway is pyrimidine metabolism; CTP biosynthesis via de novo pathway; UDP from UMP (UMPK route): step 1/1. Its activity is regulated as follows. Inhibited by UTP. In terms of biological role, catalyzes the reversible phosphorylation of UMP to UDP. This chain is Uridylate kinase, found in Rickettsia bellii (strain RML369-C).